A 410-amino-acid chain; its full sequence is MSWDQVWIDVNVATMDTNIQGAYGVIPQAAIAVKDGKIAWVGPRSELPEFDVLATPVYRGKGGWITPGLIDAHTHLVFAGNRANEFEQRLQGATYAEIARAGGGIISTVNACRDADEAELFELGRQRLNALAREGVTTVEIKSGYGLNTETELKLLRVARELGEHHHIDVSTTFLGAHAIPPEYKDNADAYIDLVVNDMLPAVIAENLADAVDVFCENIAFNLEQTERVLTAAKQAGLQIKLHAEQLTNMGGSALAAKLGAKSVDHIEFLDEAGIKAISESGTCATLLPGAFYFLRETQLPPIDLLRQYKVPMVIASDFNPGSSPICSTLLMLNMACTLFRLTPEEALQGVTINAAKALGIDNNVGSITVGKQADFCLWDITTPAQLAYAYGVNLCKTVVKNGQVVALPN.

Residues histidine 73 and histidine 75 each contribute to the Fe(3+) site. Residues histidine 73 and histidine 75 each contribute to the Zn(2+) site. 3 residues coordinate 4-imidazolone-5-propanoate: arginine 82, tyrosine 145, and histidine 178. Tyrosine 145 contributes to the N-formimidoyl-L-glutamate binding site. Histidine 243 contributes to the Fe(3+) binding site. Position 243 (histidine 243) interacts with Zn(2+). Glutamine 246 contacts 4-imidazolone-5-propanoate. Residue aspartate 318 participates in Fe(3+) binding. Aspartate 318 lines the Zn(2+) pocket. 2 residues coordinate N-formimidoyl-L-glutamate: asparagine 320 and glycine 322. Serine 323 serves as a coordination point for 4-imidazolone-5-propanoate.

The protein belongs to the metallo-dependent hydrolases superfamily. HutI family. Requires Zn(2+) as cofactor. It depends on Fe(3+) as a cofactor.

Its subcellular location is the cytoplasm. It carries out the reaction 4-imidazolone-5-propanoate + H2O = N-formimidoyl-L-glutamate. The protein operates within amino-acid degradation; L-histidine degradation into L-glutamate; N-formimidoyl-L-glutamate from L-histidine: step 3/3. In terms of biological role, catalyzes the hydrolytic cleavage of the carbon-nitrogen bond in imidazolone-5-propanoate to yield N-formimidoyl-L-glutamate. It is the third step in the universal histidine degradation pathway. This chain is Imidazolonepropionase, found in Shewanella frigidimarina (strain NCIMB 400).